We begin with the raw amino-acid sequence, 318 residues long: Methionyl-tRNA formyltransferase (318 aa).

112 to 115 (SLLP) serves as a coordination point for (6S)-5,6,7,8-tetrahydrofolate.

The protein belongs to the Fmt family.

It catalyses the reaction L-methionyl-tRNA(fMet) + (6R)-10-formyltetrahydrofolate = N-formyl-L-methionyl-tRNA(fMet) + (6S)-5,6,7,8-tetrahydrofolate + H(+). Functionally, attaches a formyl group to the free amino group of methionyl-tRNA(fMet). The formyl group appears to play a dual role in the initiator identity of N-formylmethionyl-tRNA by promoting its recognition by IF2 and preventing the misappropriation of this tRNA by the elongation apparatus. The polypeptide is Methionyl-tRNA formyltransferase (Citrifermentans bemidjiense (strain ATCC BAA-1014 / DSM 16622 / JCM 12645 / Bem) (Geobacter bemidjiensis)).